Here is a 250-residue protein sequence, read N- to C-terminus: Ribonuclease HII (250 aa).

The region spanning E66–K250 is the RNase H type-2 domain. A divalent metal cation-binding residues include D72, E73, and D164.

This sequence belongs to the RNase HII family. The cofactor is Mn(2+). Mg(2+) is required as a cofactor.

The protein resides in the cytoplasm. The catalysed reaction is Endonucleolytic cleavage to 5'-phosphomonoester.. In terms of biological role, endonuclease that specifically degrades the RNA of RNA-DNA hybrids. The sequence is that of Ribonuclease HII from Lactobacillus helveticus (strain DPC 4571).